A 228-amino-acid chain; its full sequence is Putative adhesin RBE_1271 (228 aa).

An N-terminal signal peptide occupies residues 1-22; it reads MKKLLLIAATSATVLSSALSFA.

The protein is Putative adhesin RBE_1271 of Rickettsia bellii (strain RML369-C).